Reading from the N-terminus, the 132-residue chain is Ribosome-binding factor A (132 aa).

The protein belongs to the RbfA family. Monomer. Binds 30S ribosomal subunits, but not 50S ribosomal subunits or 70S ribosomes.

Its subcellular location is the cytoplasm. One of several proteins that assist in the late maturation steps of the functional core of the 30S ribosomal subunit. Associates with free 30S ribosomal subunits (but not with 30S subunits that are part of 70S ribosomes or polysomes). Required for efficient processing of 16S rRNA. May interact with the 5'-terminal helix region of 16S rRNA. The protein is Ribosome-binding factor A of Treponema denticola (strain ATCC 35405 / DSM 14222 / CIP 103919 / JCM 8153 / KCTC 15104).